The chain runs to 192 residues: Ion-translocating oxidoreductase complex subunit B (192 aa).

The interval 1–26 (MNTIWIAVAAISLLGLAFGAILGYAS) is hydrophobic. The 60-residue stretch at 32-91 (EDDPVVEKIDEILPQSQCGQCGYPGCRPYAEAISCNGEKINRCAPGGEAVMLKISELLNV) folds into the 4Fe-4S domain. 12 residues coordinate [4Fe-4S] cluster: cysteine 49, cysteine 52, cysteine 57, cysteine 74, cysteine 117, cysteine 120, cysteine 123, cysteine 127, cysteine 147, cysteine 150, cysteine 153, and cysteine 157. 2 consecutive 4Fe-4S ferredoxin-type domains span residues 108 to 137 (VVAVIDENNCIGCTKCIQACPVDAIVGATR) and 138 to 167 (AMHTVMSDLCTGCNLCVDPCPTQCISLQPV).

Belongs to the 4Fe4S bacterial-type ferredoxin family. RnfB subfamily. As to quaternary structure, the complex is composed of six subunits: RsxA, RsxB, RsxC, RsxD, RsxE and RsxG. [4Fe-4S] cluster is required as a cofactor.

It localises to the cell inner membrane. Its function is as follows. Part of a membrane-bound complex that couples electron transfer with translocation of ions across the membrane. Required to maintain the reduced state of SoxR. The protein is Ion-translocating oxidoreductase complex subunit B of Escherichia fergusonii (strain ATCC 35469 / DSM 13698 / CCUG 18766 / IAM 14443 / JCM 21226 / LMG 7866 / NBRC 102419 / NCTC 12128 / CDC 0568-73).